Here is a 329-residue protein sequence, read N- to C-terminus: Flotillin-like protein FloA (329 aa).

Transmembrane regions (helical) follow at residues 4-24 (IAFI…FAIV) and 26-46 (VGLW…TLIG).

This sequence belongs to the flotillin-like FloA family. Homooligomerizes.

Its subcellular location is the cell membrane. The protein resides in the membrane raft. In terms of biological role, found in functional membrane microdomains (FMM) that may be equivalent to eukaryotic membrane rafts. FMMs are highly dynamic and increase in number as cells age. Flotillins are thought to be important factors in membrane fluidity. This Acetivibrio thermocellus (strain ATCC 27405 / DSM 1237 / JCM 9322 / NBRC 103400 / NCIMB 10682 / NRRL B-4536 / VPI 7372) (Clostridium thermocellum) protein is Flotillin-like protein FloA.